The sequence spans 92 residues: Small ribosomal subunit protein bS20 (92 aa).

The interval 1-28 is disordered; sequence MANTASAEKRNRQAQKRRARNVQVRTGV.

The protein belongs to the bacterial ribosomal protein bS20 family.

In terms of biological role, binds directly to 16S ribosomal RNA. In Anaeromyxobacter dehalogenans (strain 2CP-C), this protein is Small ribosomal subunit protein bS20.